Here is a 619-residue protein sequence, read N- to C-terminus: Protein Atg16l2 (619 aa).

The segment at 57 to 78 is disordered; that stretch reads LQPEPNSVTPTTHQGPWEESEL. The span at 60-70 shows a compositional bias: polar residues; sequence EPNSVTPTTHQ. Positions 116–227 form a coiled coil; the sequence is AALGTLESEL…QARVSQELKK (112 aa). WD repeat units follow at residues 334 to 373, 378 to 417, 420 to 454, 455 to 498, 500 to 539, 546 to 585, and 589 to 619; these read AHLS…LEAN, GAGG…SKET, GHKD…LGRA, YCSR…CTQV, PVQG…IRQV, KCGS…LESR, and PHCA…VLWQ.

Belongs to the WD repeat ATG16 family. In terms of assembly, homooligomer. Heterooligomer with ATG16L1. Interacts with ATG5. Self-oligomerizes to form a 800-kDa complex composed of ATG12-ATG5 and ATG16L2. Interacts with RAB33B.

It localises to the cytoplasm. The protein resides in the cytosol. Functionally, may play a role in regulating epithelial homeostasis in an ATG16L1-dependent manner. In Homo sapiens (Human), this protein is Protein Atg16l2 (ATG16L2).